Here is a 94-residue protein sequence, read N- to C-terminus: MLKPLGDRVVIEVIETEEKTASGIVLPDTAKEKPQEGRVVAVGKGRVLDSGERVAPEVEVGDRIIFSKYAGTEVKYDGKEYLILRESDILAVIG.

The protein belongs to the GroES chaperonin family. In terms of assembly, heptamer of 7 subunits arranged in a ring. Interacts with the chaperonin GroEL.

The protein resides in the cytoplasm. Its function is as follows. Together with the chaperonin GroEL, plays an essential role in assisting protein folding. The GroEL-GroES system forms a nano-cage that allows encapsulation of the non-native substrate proteins and provides a physical environment optimized to promote and accelerate protein folding. GroES binds to the apical surface of the GroEL ring, thereby capping the opening of the GroEL channel. The polypeptide is Co-chaperonin GroES (Geobacillus stearothermophilus (Bacillus stearothermophilus)).